Reading from the N-terminus, the 257-residue chain is uncharacterized protein (257 aa).

A helical membrane pass occupies residues 7 to 27 (LFLCVSFLLITIFIGGGGFMN).

Belongs to the staphylococcal tandem lipoprotein family.

The protein localises to the cell membrane. This is an uncharacterized protein from Staphylococcus epidermidis (strain ATCC 12228 / FDA PCI 1200).